The following is a 285-amino-acid chain: Probable endonuclease 4 (285 aa).

Zn(2+)-binding residues include histidine 68, histidine 108, glutamate 145, aspartate 179, histidine 182, histidine 216, aspartate 229, histidine 231, and glutamate 261.

It belongs to the AP endonuclease 2 family. The cofactor is Zn(2+).

The enzyme catalyses Endonucleolytic cleavage to 5'-phosphooligonucleotide end-products.. Endonuclease IV plays a role in DNA repair. It cleaves phosphodiester bonds at apurinic or apyrimidinic (AP) sites, generating a 3'-hydroxyl group and a 5'-terminal sugar phosphate. In Geotalea daltonii (strain DSM 22248 / JCM 15807 / FRC-32) (Geobacter daltonii), this protein is Probable endonuclease 4.